A 376-amino-acid polypeptide reads, in one-letter code: Mitogen-activated protein kinase 5 (376 aa).

One can recognise a Protein kinase domain in the interval 43–329; that stretch reads VPPIRPIGRG…VEEALCYPYL (287 aa). ATP is bound by residues 49–57 and lysine 72; that span reads IGRGAYGFV. Aspartate 169 functions as the Proton acceptor in the catalytic mechanism. Threonine 201 carries the phosphothreonine modification. The TXY signature appears at 201-203; sequence TEY. Position 203 is a phosphotyrosine (tyrosine 203). Threonine 206 is subject to Phosphothreonine.

Belongs to the protein kinase superfamily. CMGC Ser/Thr protein kinase family. MAP kinase subfamily. In terms of processing, autophosphorylated on threonine and tyrosine residues. Post-translationally, dually phosphorylated on Thr-201 and Tyr-203, which activates the enzyme.

It carries out the reaction L-seryl-[protein] + ATP = O-phospho-L-seryl-[protein] + ADP + H(+). The catalysed reaction is L-threonyl-[protein] + ATP = O-phospho-L-threonyl-[protein] + ADP + H(+). Its activity is regulated as follows. Activated by threonine and tyrosine phosphorylation. Activated by the MAP kinase kinase MKK2. Activated by the MAP kinase kinase MKK6 in vitro. The chain is Mitogen-activated protein kinase 5 (MPK5) from Arabidopsis thaliana (Mouse-ear cress).